Here is a 125-residue protein sequence, read N- to C-terminus: Histone H1-like protein HC1 (125 aa).

It belongs to the histone H1/H5 family. HCT subfamily.

In terms of biological role, might have a role analogous to that of eukaryotic histone proteins. This is Histone H1-like protein HC1 (hctA) from Chlamydia muridarum (strain MoPn / Nigg).